Consider the following 159-residue polypeptide: Ribosomal RNA large subunit methyltransferase H (159 aa).

Gly-108 contacts S-adenosyl-L-methionine.

The protein belongs to the RNA methyltransferase RlmH family. In terms of assembly, homodimer.

It is found in the cytoplasm. It carries out the reaction pseudouridine(1915) in 23S rRNA + S-adenosyl-L-methionine = N(3)-methylpseudouridine(1915) in 23S rRNA + S-adenosyl-L-homocysteine + H(+). Functionally, specifically methylates the pseudouridine at position 1915 (m3Psi1915) in 23S rRNA. This Lactobacillus gasseri (strain ATCC 33323 / DSM 20243 / BCRC 14619 / CIP 102991 / JCM 1131 / KCTC 3163 / NCIMB 11718 / NCTC 13722 / AM63) protein is Ribosomal RNA large subunit methyltransferase H.